A 153-amino-acid chain; its full sequence is Ergochrome gene cluster protein CPUR_05425 (153 aa).

Its pathway is pigment biosynthesis. Part of the ergochrome gene cluster responsible for the typical purple-black color of the ergot sclerotia. The ergochrome gene cluster produces several ergot pigments including the yellow ergochrome secalonic acid and its derivatives, as well as the red anthraquinones endocrocin and clavorubin. The pathway begins with the synthesis of atrochrysone thioester by the polyketide synthase (PKS) CPUR_05437. The atrochrysone carboxyl ACP thioesterase CPUR_05436 then breaks the thioester bond and releases the atrochrysone carboxylic acid from CPUR_05437. The atrochrysone carboxylic acid is then converted to atrochrysone which is further transformed into emodin anthrone. The next step is performed by the anthrone oxygenase CPUR_05434 that catalyzes the oxidation of emodinanthrone to emodin. Emodin is further modified to yield monodictyphenone via several steps involving CPUR_05427, CPUR_05428, CPUR_05429 and CPUR_05430. The short chain dehydrogenase/reductase CPUR_05418 then catalyzes the C-5 ketoreduction to give the xanthone skeleton of the monomeric units. Ergochromes formation requires further dimerization steps of different xanthone units, probably catalyzed by the cytochrome P450 monooxygenase CPUR_05419. CPUR_05425, CPUR_05426 and CPUR_05431 are unique to Claviceps, thus it is likely that they are involved in further modification of xanthone units or in their dimerization. The yellow ergochromes and the red anthraquinone pigments endocrocin and clavorubin are products from the same PKS derived precursors and the latter are likely shunt products in the pathway of xanthone biosynthesis. It is proposed that atrochrysone carboxylic acid released from the PKS CPUR_05437 can also be converted to endocrocin anthrone which is further oxidized into endocrocin by CPUR_05435. Endocrocin could be then modified to clavorubin, possibly by CPUR_05423 and CPUR_05431. Clavorubin is the principal anthraquinone metabolite produced by the cluster with a much higher yield compared to endocrocin. In Claviceps purpurea (strain 20.1) (Ergot fungus), this protein is Ergochrome gene cluster protein CPUR_05425.